Here is a 323-residue protein sequence, read N- to C-terminus: V-type ATP synthase subunit C (323 aa).

This sequence belongs to the V-ATPase V0D/AC39 subunit family.

Its function is as follows. Produces ATP from ADP in the presence of a proton gradient across the membrane. This chain is V-type ATP synthase subunit C (atpC), found in Thermus thermophilus (strain ATCC 27634 / DSM 579 / HB8).